The primary structure comprises 103 residues: Large ribosomal subunit protein uL24 (103 aa).

The protein belongs to the universal ribosomal protein uL24 family. Part of the 50S ribosomal subunit.

Functionally, one of two assembly initiator proteins, it binds directly to the 5'-end of the 23S rRNA, where it nucleates assembly of the 50S subunit. Its function is as follows. One of the proteins that surrounds the polypeptide exit tunnel on the outside of the subunit. The protein is Large ribosomal subunit protein uL24 of Ruthia magnifica subsp. Calyptogena magnifica.